A 1216-amino-acid polypeptide reads, in one-letter code: RAB11-binding protein RELCH (1216 aa).

2 disordered regions span residues 1 to 73 (MAAM…GLPG) and 135 to 177 (GNFE…QLNR). A2 carries the N-acetylalanine modification. A phosphoserine mark is found at S20 and S22. A compositionally biased stretch (acidic residues) spans 21–31 (DSDEDDDEVAA). The residue at position 32 (T32) is a Phosphothreonine. Phosphoserine occurs at positions 54 and 56. The span at 148–163 (GAPGVPGAAGVGGAGG) shows a compositional bias: gly residues. Residues S180 and S182 each carry the phosphoserine modification. Residue T183 is modified to Phosphothreonine. Position 186 is a phosphoserine (S186). The stretch at 197 to 231 (NRETDEKVAVLEFELRKAKETIQALRANLTKAAEH) forms a coiled coil. In terms of domain architecture, LisH spans 255 to 287 (EKRALNFLVNEFLLKNNYKLTSITFSDENDDQD). The stretch at 359 to 397 (VQKLEDKISLLNSEKWSLMEQIRRLKSEMDFLKNEHFAI) forms a coiled coil. A Phosphoserine modification is found at S385. The segment at 401 to 477 (CDSVQPPLDQ…SSLSSKKTVH (77 aa)) is disordered. A compositionally biased stretch (basic and acidic residues) spans 411–435 (LPHKDSEDSGQHPDVNSSDKGKNTD). S453 carries the post-translational modification Phosphoserine. The segment at 497 to 779 (CRMSADSRLG…SSKAKLHGEV (283 aa)) is interaction with RAB11A and RAB11B. 2 HEAT repeats span residues 601–639 (LLPQ…RSSL) and 640–679 (VLSM…KYHQ). At S792 the chain carries Phosphoserine. The stretch at 1004-1042 (VAPALVTLSSDPEFSVRIATIPAFGTIMETVIQRELLER) is one HEAT 3 repeat. Position 1149 is a phosphoserine (S1149).

It is found in the recycling endosome. The protein localises to the golgi apparatus. Its subcellular location is the trans-Golgi network. Functionally, regulates intracellular cholesterol distribution from recycling endosomes to the trans-Golgi network through interactions with RAB11 and OSBP. Functions in membrane tethering and promotes OSBP-mediated cholesterol transfer between RAB11-bound recycling endosomes and OSBP-bound Golgi-like membranes. The protein is RAB11-binding protein RELCH of Homo sapiens (Human).